The sequence spans 543 residues: Chaperonin GroEL (543 aa).

Residues 29-32 (TVGP), 86-90 (DGTTT), Gly413, and Asp504 each bind ATP.

Belongs to the chaperonin (HSP60) family. As to quaternary structure, forms a cylinder of 14 subunits composed of two heptameric rings stacked back-to-back. Interacts with the co-chaperonin GroES.

The protein resides in the cytoplasm. It carries out the reaction ATP + H2O + a folded polypeptide = ADP + phosphate + an unfolded polypeptide.. Together with its co-chaperonin GroES, plays an essential role in assisting protein folding. The GroEL-GroES system forms a nano-cage that allows encapsulation of the non-native substrate proteins and provides a physical environment optimized to promote and accelerate protein folding. In Mycoplasma pneumoniae (strain ATCC 29342 / M129 / Subtype 1) (Mycoplasmoides pneumoniae), this protein is Chaperonin GroEL.